The primary structure comprises 142 residues: MAKKIAGYIKLQVPAGAANPSPPIGPALGQRGVNIMEFCKAFNAKTQEMEKGMPIPTTITVFSDKSFTFAIATPPASFFLKKAAKIAKGSSTPSQTTAGTVSMAQCREIAEAKFNDLNANDLDQATKIIAGSARSMGLQVTE.

This sequence belongs to the universal ribosomal protein uL11 family. In terms of assembly, part of the ribosomal stalk of the 50S ribosomal subunit. Interacts with L10 and the large rRNA to form the base of the stalk. L10 forms an elongated spine to which L12 dimers bind in a sequential fashion forming a multimeric L10(L12)X complex. One or more lysine residues are methylated.

Functionally, forms part of the ribosomal stalk which helps the ribosome interact with GTP-bound translation factors. The polypeptide is Large ribosomal subunit protein uL11 (Maricaulis maris (strain MCS10) (Caulobacter maris)).